The following is a 323-amino-acid chain: Beta-ketoacyl-[acyl-carrier-protein] synthase III (323 aa).

Residues Cys112 and His249 contribute to the active site. The ACP-binding stretch occupies residues 250–254; it reads QANYR. Asn279 is a catalytic residue.

Belongs to the thiolase-like superfamily. FabH family. In terms of assembly, homodimer.

It localises to the cytoplasm. It carries out the reaction malonyl-[ACP] + acetyl-CoA + H(+) = 3-oxobutanoyl-[ACP] + CO2 + CoA. Its pathway is lipid metabolism; fatty acid biosynthesis. Functionally, catalyzes the condensation reaction of fatty acid synthesis by the addition to an acyl acceptor of two carbons from malonyl-ACP. Catalyzes the first condensation reaction which initiates fatty acid synthesis and may therefore play a role in governing the total rate of fatty acid production. Possesses both acetoacetyl-ACP synthase and acetyl transacylase activities. Its substrate specificity determines the biosynthesis of branched-chain and/or straight-chain of fatty acids. In Clostridium kluyveri (strain NBRC 12016), this protein is Beta-ketoacyl-[acyl-carrier-protein] synthase III.